Reading from the N-terminus, the 247-residue chain is MESRFIKAERDTKLKLNYDAGNIISPKVHSVGVLALGSYLENHGPVLPIDTDIKIASYLALNASIKTGAKFIGTVYPATEYPYVKHGIHVSVKDLIENIVSIMKLANKYIGIDKSVIVNAHGGNLPLKKHINVIERETGMKIVMNNKIVEIEGPHAGSGETSLGYVIGIADVERMNEIDFKKYPEIGMVGLKSARKLNKKIDEGAKIVEKEGVKINPKLGRKLLNIALNDIINDIKHLIRMDKNETK.

Residues glutamate 41, histidine 43, aspartate 52, and histidine 121 each contribute to the Fe cation site.

Belongs to the creatininase superfamily. FAPy deformylase family. As to quaternary structure, homodimer. The cofactor is Fe(2+). Zn(2+) is required as a cofactor.

The catalysed reaction is 2-amino-5-formylamino-6-(5-phospho-D-ribosylamino)pyrimidin-4(3H)-one + H2O = 2,5-diamino-6-(1-D-ribosylamino)pyrimidin-4(3H)-one 5'-phosphate + formate + H(+). Its pathway is cofactor biosynthesis; coenzyme F420 biosynthesis. The protein operates within cofactor biosynthesis; riboflavin biosynthesis. Functionally, catalyzes the hydrolysis of the formamide of 2-amino-5-formylamino-6-ribosylamino-4(3H)-pyrimidinone 5'-monophosphate (FAPy) to form 2,5-diamino-6-ribosylamino-4(3H)-pyrimidinone 5'-phosphate (APy). The polypeptide is 2-amino-5-formylamino-6-ribosylaminopyrimidin-4(3H)-one 5'-monophosphate deformylase (Methanothermus fervidus (strain ATCC 43054 / DSM 2088 / JCM 10308 / V24 S)).